The chain runs to 387 residues: MASSPLTANVQGTNASLRNRDEETADKQIQFNDQSFGGNDYAPKVRKPYTITKERERWTDEEHKKFVEALKLYGRAWRRIEEHVGSKTAVQIRSHAQKFFSKVAREATGGDGSSVEPIVIPPPRPKRKPAHPYPRKFGNEADQTSRSVSPSERDTQSPTSVLSTVGSEALCSLDSSSPNRSLSPVSSASPPAALTTTANAPEELETLKLELFPSERLLNRESSIKEPTKQSLKLFGKTVLVSDSGMSSSLTTSTYCKSPIQPLPRKLSSSKTLPIIRNSQEELLSCWIQVPLKQEDVENRCLDSGKAVQNEGSSTGSNTGSVDDTGHTEKTTEPETMLCQWEFKPSERSAFSELRRTNSESNSRGFGPYKKRKMVTEEEEHEIHLHL.

Polar residues-rich tracts occupy residues 1–17 (MASS…NASL) and 27–37 (KQIQFNDQSFG). A disordered region spans residues 1-44 (MASSPLTANVQGTNASLRNRDEETADKQIQFNDQSFGGNDYAPK). The HTH myb-type domain maps to 50-104 (TITKERERWTDEEHKKFVEALKLYGRAWRRIEEHVGSKTAVQIRSHAQKFFSKVA). Positions 77–100 (WRRIEEHVGSKTAVQIRSHAQKFF) form a DNA-binding region, H-T-H motif. Disordered regions lie at residues 105–200 (REAT…TANA), 306–334 (KAVQ…TTEP), and 350–387 (AFSE…HLHL). The segment covering 124–134 (RPKRKPAHPYP) has biased composition (basic residues). Residues 141 to 166 (ADQTSRSVSPSERDTQSPTSVLSTVG) are compositionally biased toward polar residues. Composition is skewed to low complexity over residues 172-200 (SLDS…TANA) and 312-323 (GSSTGSNTGSVD). The span at 324 to 333 (DTGHTEKTTE) shows a compositional bias: basic and acidic residues.

It is found in the nucleus. Morning-phased transcription factor integrating the circadian clock and auxin pathways. Binds to the evening element (EE) of promoters. Does not act within the central clock, but regulates free auxin levels in a time-of-day specific manner. Positively regulates the expression of YUC8 during the day, but has no effect during the night. Negative regulator of freezing tolerance. The chain is Protein REVEILLE 1 (RVE1) from Arabidopsis thaliana (Mouse-ear cress).